The chain runs to 346 residues: Methylthioribose-1-phosphate isomerase (346 aa).

Substrate is bound by residues 47-49, R88, and Q195; that span reads RGA. Catalysis depends on D236, which acts as the Proton donor. 246 to 247 is a substrate binding site; sequence NK.

It belongs to the eIF-2B alpha/beta/delta subunits family. MtnA subfamily.

The catalysed reaction is 5-(methylsulfanyl)-alpha-D-ribose 1-phosphate = 5-(methylsulfanyl)-D-ribulose 1-phosphate. It functions in the pathway amino-acid biosynthesis; L-methionine biosynthesis via salvage pathway; L-methionine from S-methyl-5-thio-alpha-D-ribose 1-phosphate: step 1/6. Catalyzes the interconversion of methylthioribose-1-phosphate (MTR-1-P) into methylthioribulose-1-phosphate (MTRu-1-P). This Maridesulfovibrio salexigens (strain ATCC 14822 / DSM 2638 / NCIMB 8403 / VKM B-1763) (Desulfovibrio salexigens) protein is Methylthioribose-1-phosphate isomerase.